Reading from the N-terminus, the 144-residue chain is Lysozyme C II (144 aa).

A signal peptide spans 1–15; the sequence is MRAVVVLLLVAVASA. The 129-residue stretch at 16–144 folds into the C-type lysozyme domain; that stretch reads KVYDRCELAR…LRSYVAGCGV (129 aa). Disulfide bonds link Cys21–Cys142, Cys45–Cys130, Cys79–Cys95, and Cys91–Cys109. Residues Glu50 and Asp67 contribute to the active site.

It is found in the secreted. It carries out the reaction Hydrolysis of (1-&gt;4)-beta-linkages between N-acetylmuramic acid and N-acetyl-D-glucosamine residues in a peptidoglycan and between N-acetyl-D-glucosamine residues in chitodextrins.. Functionally, lysozymes have primarily a bacteriolytic function; those in tissues and body fluids are associated with the monocyte-macrophage system and enhance the activity of immunoagents. Has antibacterial activity against the Gram positive bacterium P.citreus. Has no antibacterial activity against the Gram negative bacteria E.coli and Y.ruckeri. Does not have hemolytic activity against trout erythrocytes. The polypeptide is Lysozyme C II (Oncorhynchus mykiss (Rainbow trout)).